A 561-amino-acid chain; its full sequence is Small ribosomal subunit protein bS1 (561 aa).

S1 motif domains lie at 22–88 (GEVI…LSRE), 106–172 (GDIL…VSRR), 193–261 (GSVI…LGMK), 278–348 (GTRL…LGMK), 365–435 (GDKI…LGIK), and 452–521 (GSLV…LSVK).

It belongs to the bacterial ribosomal protein bS1 family.

Binds mRNA; thus facilitating recognition of the initiation point. It is needed to translate mRNA with a short Shine-Dalgarno (SD) purine-rich sequence. The sequence is that of Small ribosomal subunit protein bS1 (rpsA) from Neisseria meningitidis serogroup B (strain ATCC BAA-335 / MC58).